Here is a 775-residue protein sequence, read N- to C-terminus: WD repeat-containing protein pop1 (775 aa).

Residues 298–345 (KNFLTGFPAEITNLVLTHLDAPSLCAVSQVSHHWYKLVSSNEELWKSL) form the F-box domain. WD repeat units lie at residues 444–472 (EHEGDVWTFEYVGDTLVTGSTDRTVRVWD), 484–538 (GHTS…RLWS), 575–603 (GHTDSVREVACLGDLIVSASYDGTLRVWK), 615–645 (GHVGRVYSVTINPSRQQCISAGTDAKIRIWN), and 657–687 (GHSNLVSQVTFNQNILVSASAPPDTSLRVWD).

In terms of assembly, homodimer and heterodimer with pop2. Binds to cdc18, phosphorylated cig2, cul1, pip1 and skp1.

Its subcellular location is the nucleus. Its function is as follows. Involved in maintenance of ploidy through proteasome dependent degradation of CDK inhibitor rum1 and S-phase initiator cdc18. Functions as a recognition factor for rum1 and cdc18, which are subsequently ubiquitinated and targeted to the 26S proteasome for degradation. Together with pop2, required for cig2 instability during G2 and M phase and cig2 degradation in exponentially growing cells. Regulates cell-cycle progression under starvation through the rum1 protein. This is WD repeat-containing protein pop1 (pop1) from Schizosaccharomyces pombe (strain 972 / ATCC 24843) (Fission yeast).